The sequence spans 126 residues: Holo-[acyl-carrier-protein] synthase (126 aa).

2 residues coordinate Mg(2+): aspartate 9 and glutamate 58.

The protein belongs to the P-Pant transferase superfamily. AcpS family. The cofactor is Mg(2+).

Its subcellular location is the cytoplasm. The enzyme catalyses apo-[ACP] + CoA = holo-[ACP] + adenosine 3',5'-bisphosphate + H(+). In terms of biological role, transfers the 4'-phosphopantetheine moiety from coenzyme A to a Ser of acyl-carrier-protein. This is Holo-[acyl-carrier-protein] synthase from Erwinia tasmaniensis (strain DSM 17950 / CFBP 7177 / CIP 109463 / NCPPB 4357 / Et1/99).